The following is a 327-amino-acid chain: Alkanal monooxygenase beta chain (327 aa).

The protein belongs to the bacterial luciferase oxidoreductase family. As to quaternary structure, heterodimer of an alpha and a beta chain.

The catalysed reaction is a long-chain fatty aldehyde + FMNH2 + O2 = a long-chain fatty acid + hnu + FMN + H2O + 2 H(+). Its function is as follows. Light-emitting reaction in luminous bacteria. The specific role of the beta subunit is unknown, but it is absolutely required for bioluminescence activity. The protein is Alkanal monooxygenase beta chain (luxB) of Photorhabdus luminescens (Xenorhabdus luminescens).